A 303-amino-acid polypeptide reads, in one-letter code: Putative S-adenosyl-L-methionine-dependent methyltransferase MAB_0213c (303 aa).

S-adenosyl-L-methionine is bound by residues D126 and 155-156 (DL).

Belongs to the UPF0677 family.

In terms of biological role, exhibits S-adenosyl-L-methionine-dependent methyltransferase activity. This is Putative S-adenosyl-L-methionine-dependent methyltransferase MAB_0213c from Mycobacteroides abscessus (strain ATCC 19977 / DSM 44196 / CCUG 20993 / CIP 104536 / JCM 13569 / NCTC 13031 / TMC 1543 / L948) (Mycobacterium abscessus).